The chain runs to 288 residues: Glycine--tRNA ligase alpha subunit (288 aa).

The protein belongs to the class-II aminoacyl-tRNA synthetase family. As to quaternary structure, tetramer of two alpha and two beta subunits.

It is found in the cytoplasm. The catalysed reaction is tRNA(Gly) + glycine + ATP = glycyl-tRNA(Gly) + AMP + diphosphate. In Desulfatibacillum aliphaticivorans, this protein is Glycine--tRNA ligase alpha subunit.